Reading from the N-terminus, the 71-residue chain is Gas vesicle protein A (71 aa).

The alpha helix 1 stretch occupies residues 12 to 22; it reads LAEVIDRILDK. Residues 23 to 32 form a beta-strand 1 region; the sequence is GIVIDAWVRV. Positions 33–36 are beta turn; the sequence is SLVG. A beta-strand 2 region spans residues 37–46; it reads IELLAIEARI. Residues 47 to 70 form an alpha helix 2 region; sequence VIASVETYLKYAEAVGLTQSAAVP.

It belongs to the gas vesicle GvpA family. In terms of assembly, the gas vesicle shell is 2 nm thick and consists of a single layer of this protein. It forms helical ribs nearly perpendicular to the long axis of the vesicle.

It localises to the gas vesicle shell. Gas vesicles (GV) are hollow, gas filled proteinaceous nanostructures found in some microorganisms. During planktonic growth they allow positioning of the organism at a favorable depth for light or nutrient acquisition. GVs are highly permeable to gas. GvpA forms the protein shell. The ratio of GvpA:GvpC is estimated to be 33:1 and more recently 25:1. This chain is Gas vesicle protein A, found in Dolichospermum flosaquae (Anabaena flos-aquae).